The sequence spans 343 residues: T-cell immunoglobulin and mucin domain-containing protein 4 (343 aa).

The first 22 residues, 1-22 (MSKGLLLLWLVTELWWLYLTPA), serve as a signal peptide directing secretion. The Ig-like V-type domain maps to 23–128 (ASEDTIIGFL…WFNDVKKNVR (106 aa)). The Extracellular portion of the chain corresponds to 23–279 (ASEDTIIGFL…KSHQINSRQT (257 aa)). Disulfide bonds link cysteine 40-cysteine 112, cysteine 53-cysteine 64, and cysteine 59-cysteine 111. Asparagine 220 is a glycosylation site (N-linked (GlcNAc...) asparagine). The tract at residues 239–258 (TGSNPGILPSTSQLTTQKTT) is disordered. Positions 248–258 (STSQLTTQKTT) are enriched in low complexity. The helical transmembrane segment at 280–300 (ILIIACCVGFVLMVLLFLAFL) threads the bilayer. Over 301 to 343 (LRGKVTGANCLQRHKRPDNTEDSDSVLNDMSHGRDDEDGIFTL) the chain is Cytoplasmic. A disordered region spans residues 313-343 (RHKRPDNTEDSDSVLNDMSHGRDDEDGIFTL). Serine 323, serine 325, and serine 331 each carry phosphoserine.

It belongs to the immunoglobulin superfamily. TIM family. As to quaternary structure, homodimer. Predominantly expressed in lymphoid tissues, such as spleen, lymph nodes, and Peyer patches. Also expressed in fetal liver, salivary gland, and spleen stromal cells, predominantly in the marginal zone and to a lesser extent throughout the white pulp. Not expressed in bone marrow-derived cells. Expressed mainly by antigen presenting cells (APCs) in T- and B-cell areas, but not by T- or B-lymphocytes.

Its subcellular location is the membrane. Functionally, phosphatidylserine receptor that plays different role in immune response including phagocytosis of apoptotic cells and T-cell regulation. Controls T-cell activation in a bimodal fashion, decreasing the activation of naive T-cells by inducing cell cycle arrest, while increasing proliferation of activated T-cells by activating AKT1 and ERK1/2 phosphorylations and subsequent signaling pathways. Also plays a role in efferocytosis which is the process by which apoptotic cells are removed by phagocytic cells. Mechanistically, promotes the engulfment of apoptotic cells or exogenous particles by securing them to phagocytes through direct binding to phosphatidylserine present on apoptotic cells, while other engulfment receptors such as MERTK efficiently recognize apoptotic cells and mediate their ingestion. Additionally, promotes autophagy process by suppressing NLRP3 inflammasome activity via activation of STK11/PRKAA1 pathway in a phosphatidylserine-dependent mechanism. This is T-cell immunoglobulin and mucin domain-containing protein 4 (Timd4) from Mus musculus (Mouse).